A 268-amino-acid polypeptide reads, in one-letter code: Phosphatidylglycerol--prolipoprotein diacylglyceryl transferase (268 aa).

7 consecutive transmembrane segments (helical) span residues 10–30 (VALAIGPLKIHWYGLMYLIGI), 56–76 (LVFWLSMGVIVGGRLGYVLFY), 92–112 (WKGGMSFHGGFIGVMLAALWF), 120–140 (FFELMDFVAPLVPIGLGAGRI), 174–194 (PSQLYQFALEGVALFVILWLF), 202–222 (MAVSGMFALFYGIFRFIVEFV), and 236–256 (WLTMGQILCVPMILAGLGLIW). Residue arginine 139 coordinates a 1,2-diacyl-sn-glycero-3-phospho-(1'-sn-glycerol).

The protein belongs to the Lgt family.

Its subcellular location is the cell inner membrane. It carries out the reaction L-cysteinyl-[prolipoprotein] + a 1,2-diacyl-sn-glycero-3-phospho-(1'-sn-glycerol) = an S-1,2-diacyl-sn-glyceryl-L-cysteinyl-[prolipoprotein] + sn-glycerol 1-phosphate + H(+). Its pathway is protein modification; lipoprotein biosynthesis (diacylglyceryl transfer). In terms of biological role, catalyzes the transfer of the diacylglyceryl group from phosphatidylglycerol to the sulfhydryl group of the N-terminal cysteine of a prolipoprotein, the first step in the formation of mature lipoproteins. This chain is Phosphatidylglycerol--prolipoprotein diacylglyceryl transferase, found in Pseudomonas putida (strain ATCC 700007 / DSM 6899 / JCM 31910 / BCRC 17059 / LMG 24140 / F1).